A 353-amino-acid chain; its full sequence is Ferredoxin--NADP reductase 1 (353 aa).

Positions 14, 33, 41, 46, 86, 121, 289, and 330 each coordinate FAD.

It belongs to the ferredoxin--NADP reductase type 2 family. Homodimer. FAD serves as cofactor.

It carries out the reaction 2 reduced [2Fe-2S]-[ferredoxin] + NADP(+) + H(+) = 2 oxidized [2Fe-2S]-[ferredoxin] + NADPH. In Christiangramia forsetii (strain DSM 17595 / CGMCC 1.15422 / KT0803) (Gramella forsetii), this protein is Ferredoxin--NADP reductase 1.